The chain runs to 334 residues: tRNA-cytidine(32) 2-sulfurtransferase (334 aa).

Residues 74–79 carry the PP-loop motif motif; the sequence is SGGKDS. [4Fe-4S] cluster contacts are provided by C149, C152, and C240.

Belongs to the TtcA family. In terms of assembly, homodimer. Requires Mg(2+) as cofactor. The cofactor is [4Fe-4S] cluster.

It is found in the cytoplasm. It catalyses the reaction cytidine(32) in tRNA + S-sulfanyl-L-cysteinyl-[cysteine desulfurase] + AH2 + ATP = 2-thiocytidine(32) in tRNA + L-cysteinyl-[cysteine desulfurase] + A + AMP + diphosphate + H(+). Its pathway is tRNA modification. Its function is as follows. Catalyzes the ATP-dependent 2-thiolation of cytidine in position 32 of tRNA, to form 2-thiocytidine (s(2)C32). The sulfur atoms are provided by the cysteine/cysteine desulfurase (IscS) system. This Burkholderia ambifaria (strain ATCC BAA-244 / DSM 16087 / CCUG 44356 / LMG 19182 / AMMD) (Burkholderia cepacia (strain AMMD)) protein is tRNA-cytidine(32) 2-sulfurtransferase.